Here is a 423-residue protein sequence, read N- to C-terminus: Serine--tRNA ligase (423 aa).

L-serine is bound at residue 228–230 (TSE). Position 259 to 261 (259 to 261 (RLE)) interacts with ATP. Glu282 serves as a coordination point for L-serine. ATP is bound at residue 346 to 349 (EISS). L-serine is bound at residue Ser384.

It belongs to the class-II aminoacyl-tRNA synthetase family. Type-1 seryl-tRNA synthetase subfamily. As to quaternary structure, homodimer. The tRNA molecule binds across the dimer.

The protein localises to the cytoplasm. The catalysed reaction is tRNA(Ser) + L-serine + ATP = L-seryl-tRNA(Ser) + AMP + diphosphate + H(+). It carries out the reaction tRNA(Sec) + L-serine + ATP = L-seryl-tRNA(Sec) + AMP + diphosphate + H(+). The protein operates within aminoacyl-tRNA biosynthesis; selenocysteinyl-tRNA(Sec) biosynthesis; L-seryl-tRNA(Sec) from L-serine and tRNA(Sec): step 1/1. Catalyzes the attachment of serine to tRNA(Ser). Is also able to aminoacylate tRNA(Sec) with serine, to form the misacylated tRNA L-seryl-tRNA(Sec), which will be further converted into selenocysteinyl-tRNA(Sec). This Ehrlichia canis (strain Jake) protein is Serine--tRNA ligase.